The sequence spans 247 residues: Mast cell protease 2 (247 aa).

The N-terminal stretch at 1–19 (MHLLALHLLLFLLGSRAKA) is a signal peptide. The propeptide at 20–21 (GE) is activation peptide. Residues 22 to 245 (IIGGTECKPH…YRPWINKILR (224 aa)) form the Peptidase S1 domain. C51 and C67 are joined by a disulfide. The active-site Charge relay system is the H66. N80 carries an N-linked (GlcNAc...) asparagine glycan. D110 (charge relay system) is an active-site residue. Disulfide bonds link C144-C209 and C175-C188. S203 serves as the catalytic Charge relay system.

This sequence belongs to the peptidase S1 family. Granzyme subfamily.

The sequence is that of Mast cell protease 2 from Meriones unguiculatus (Mongolian jird).